The primary structure comprises 926 residues: DNA topoisomerase 3-alpha (926 aa).

The 145-residue stretch at 10–154 folds into the Toprim domain; that stretch reads TVLNVAEKPS…NLFIRRAHFS (145 aa). Residues E16, D123, and D125 each contribute to the Mg(2+) site. One can recognise a Topo IA-type catalytic domain in the interval 172–604; sequence NQLFAEAVDA…CLQQMKACFL (433 aa). Residues 219–224 are interaction with DNA; the sequence is SYGPCQ. The O-(5'-phospho-DNA)-tyrosine intermediate role is filled by Y342. The segment at 642–670 adopts a C4-type zinc-finger fold; that stretch reads CNLCNESDMALRKNRDGNFMVGCMNYPQC. Disordered regions lie at residues 740–760 and 775–806; these read SRSQ…QGSN and HAST…TVSC. Positions 750–760 are enriched in polar residues; that stretch reads TAPSNNIQGSN. Residues 767–782 form a CCHC-type 1 zinc finger; it reads CIHCQQRGHASTNCPS. The Zn(2+) site is built by C806, C809, C831, and C836. The GRF-type zinc finger occupies 806 to 845; that stretch reads CNTCGSQCVLRTANTEANRGRQFFSCPTQGCSFFAWEDSI. The segment at 849–890 is disordered; sequence SGNATTGSNSGGSGRRGSRGRGRGGRGGQSSGGRRGSGTSFV. The segment covering 873–884 has biased composition (gly residues); the sequence is GRGGQSSGGRRG. The CCHC-type 2 zinc finger occupies 901-917; the sequence is RCFSCGDPSHFANACPN.

This sequence belongs to the type IA topoisomerase family. As to quaternary structure, component of the RMI complex, containing at least TOP3A and RMI1. The RMI complex interacts with RECQL4A. Mg(2+) is required as a cofactor.

It catalyses the reaction ATP-independent breakage of single-stranded DNA, followed by passage and rejoining.. In terms of biological role, releases the supercoiling and torsional tension of DNA introduced during the DNA replication and transcription by transiently cleaving and rejoining one strand of the DNA duplex. Introduces a single-strand break via transesterification at a target site in duplex DNA. The scissile phosphodiester is attacked by the catalytic tyrosine of the enzyme, resulting in the formation of a DNA-(5'-phosphotyrosyl)-enzyme intermediate and the expulsion of a 3'-OH DNA strand. The free DNA strand then undergoes passage around the unbroken strand thus removing DNA supercoils. Finally, in the religation step, the DNA 3'-OH attacks the covalent intermediate to expel the active-site tyrosine and restore the DNA phosphodiester backbone. Essential component of the RMI complex, a complex that plays an important role in the resolution step of homologous recombination, in a process called Holliday Junction dissolution, to limit DNA crossover formation in cells. Together with RMI1, is essential for the resolution of meiotic recombination intermediates, a step that prevents entanglement of the parental chromosomes. May have DNA decatenation activity. The sequence is that of DNA topoisomerase 3-alpha (TOP3A) from Arabidopsis thaliana (Mouse-ear cress).